The following is a 193-amino-acid chain: Holliday junction branch migration complex subunit RuvA (193 aa).

The domain I stretch occupies residues 1 to 64; it reads MIGRIAGILL…EDAHLLYGFL (64 aa). Residues 65 to 139 are domain II; that stretch reads TPQERTTFRE…GKLGADLGAL (75 aa). The flexible linker stretch occupies residues 139–143; sequence LAGAA. The tract at residues 144-193 is domain III; sequence SQSDHATDILNALVALGYSEKEGLAAIKNVPAGTGVSEGIKLALKALSKV.

This sequence belongs to the RuvA family. In terms of assembly, homotetramer. Forms an RuvA(8)-RuvB(12)-Holliday junction (HJ) complex. HJ DNA is sandwiched between 2 RuvA tetramers; dsDNA enters through RuvA and exits via RuvB. An RuvB hexamer assembles on each DNA strand where it exits the tetramer. Each RuvB hexamer is contacted by two RuvA subunits (via domain III) on 2 adjacent RuvB subunits; this complex drives branch migration. In the full resolvosome a probable DNA-RuvA(4)-RuvB(12)-RuvC(2) complex forms which resolves the HJ.

Its subcellular location is the cytoplasm. Functionally, the RuvA-RuvB-RuvC complex processes Holliday junction (HJ) DNA during genetic recombination and DNA repair, while the RuvA-RuvB complex plays an important role in the rescue of blocked DNA replication forks via replication fork reversal (RFR). RuvA specifically binds to HJ cruciform DNA, conferring on it an open structure. The RuvB hexamer acts as an ATP-dependent pump, pulling dsDNA into and through the RuvAB complex. HJ branch migration allows RuvC to scan DNA until it finds its consensus sequence, where it cleaves and resolves the cruciform DNA. This is Holliday junction branch migration complex subunit RuvA from Burkholderia ambifaria (strain MC40-6).